The chain runs to 169 residues: Peptide deformylase (169 aa).

Residues cysteine 91 and histidine 133 each coordinate Fe cation. The active site involves glutamate 134. Histidine 137 provides a ligand contact to Fe cation.

Belongs to the polypeptide deformylase family. The cofactor is Fe(2+).

The enzyme catalyses N-terminal N-formyl-L-methionyl-[peptide] + H2O = N-terminal L-methionyl-[peptide] + formate. In terms of biological role, removes the formyl group from the N-terminal Met of newly synthesized proteins. Requires at least a dipeptide for an efficient rate of reaction. N-terminal L-methionine is a prerequisite for activity but the enzyme has broad specificity at other positions. This chain is Peptide deformylase, found in Haemophilus influenzae (strain ATCC 51907 / DSM 11121 / KW20 / Rd).